The chain runs to 317 residues: L-lactate dehydrogenase (317 aa).

NAD(+) contacts are provided by residues valine 17, aspartate 38, lysine 43, and 82-83 (GA). Residues glutamine 85, arginine 91, and 123–126 (NPVD) contribute to the substrate site. Residues 121–123 (VAN) and serine 146 contribute to the NAD(+) site. Residue 151-154 (DSAR) participates in substrate binding. Beta-D-fructose 1,6-bisphosphate contacts are provided by arginine 156 and histidine 171. Catalysis depends on histidine 178, which acts as the Proton acceptor. The residue at position 224 (tyrosine 224) is a Phosphotyrosine. Threonine 233 is a binding site for substrate.

It belongs to the LDH/MDH superfamily. LDH family. Homotetramer.

The protein resides in the cytoplasm. The enzyme catalyses (S)-lactate + NAD(+) = pyruvate + NADH + H(+). Its pathway is fermentation; pyruvate fermentation to lactate; (S)-lactate from pyruvate: step 1/1. With respect to regulation, allosterically activated by fructose 1,6-bisphosphate (FBP). Catalyzes the conversion of lactate to pyruvate. This is L-lactate dehydrogenase from Moorella thermoacetica (strain ATCC 39073 / JCM 9320).